Consider the following 33-residue polypeptide: Pardaxin P-3 (33 aa).

Belongs to the pardaxin family. In aqueous solution exists as a tetramer.

It is found in the secreted. The protein localises to the target cell membrane. Its function is as follows. Exhibits unusual shark repellent and surfactant properties. Forms voltage-dependent, ion-permeable channels in membranes. At high concentration causes cell membrane lysis. In Pardachirus pavoninus (Peacock sole), this protein is Pardaxin P-3.